The sequence spans 227 residues: Guanylate kinase (227 aa).

The Guanylate kinase-like domain maps to 21–199; the sequence is GNLFMVVAPS…ALAELECIVA (179 aa). Residue 28-35 participates in ATP binding; that stretch reads APSGAGKS.

It belongs to the guanylate kinase family.

It localises to the cytoplasm. It carries out the reaction GMP + ATP = GDP + ADP. Essential for recycling GMP and indirectly, cGMP. In Burkholderia orbicola (strain AU 1054), this protein is Guanylate kinase.